The primary structure comprises 565 residues: NAD-dependent malic enzyme (565 aa).

The active-site Proton donor is Tyr104. Arg157 contributes to the NAD(+) binding site. Catalysis depends on Lys175, which acts as the Proton acceptor. The a divalent metal cation site is built by Glu246, Asp247, and Asp270. NAD(+) contacts are provided by Asp270 and Asn418.

It belongs to the malic enzymes family. As to quaternary structure, homotetramer. Requires Mg(2+) as cofactor. It depends on Mn(2+) as a cofactor.

The enzyme catalyses (S)-malate + NAD(+) = pyruvate + CO2 + NADH. It carries out the reaction oxaloacetate + H(+) = pyruvate + CO2. This chain is NAD-dependent malic enzyme, found in Salmonella heidelberg (strain SL476).